Consider the following 637-residue polypeptide: MQGTVNSERLKFDAEVGKVLKLVIHSLYTNKDIFLRELISNASDACDKLRYQSLSNQDLMDAGSELKIVISVDKDKNRLYISDNGIGMNREDLINNLGTIAHSGTQKFLDAINSGASSQQGVVELIGKFGVGFYSAFMVASEVIVESCKAGESVGYQWKSSGDGEFVISQLESDQVSRGTRITLALKPEECEFVDKFRIEHIVTTYSYHINYPVYFLNDKGEEERLNSEAAIWTKAKDEISAEEHQNFFRTVAHVGGEPWMILHNKNEGVIEYTNLLYIPSIKPFDLFHPDRKCSVKLYVNKVFITEDNVQIIPQYLRFLKGIIDSSDLPLNISRETLQNNKIIEKIKRSLVKRVLSELKKKAESNIEDYTKFWDNFGSVLKEGLCESMNTEFREELISVCRFYSTHSNDSLISLEDYIERMKPEQNNIYYLTGNDLDSIKKSPQLEGFVSRGVEVLLLVDPVDDFWTNVVTDYQKVPLRSVIRADEDLEKFSDVEKGDESKDSQNEDTQSKEKVDKFIGYAAQVLNNLVSNVRVSKKLTDSPVCLAVADGSMDIRMERFLREQKQLNYKSTKILEINSKHPIISKMIDQYTENGESAMLCNMLHLLLGQACILEGEELQNVSDFAERMNSVLSQIN.

The segment at 1-335 (MQGTVNSERL…SSDLPLNISR (335 aa)) is a; substrate-binding. The segment at 336 to 559 (ETLQNNKIIE…DGSMDIRMER (224 aa)) is b. The interval 560–637 (FLREQKQLNY…RMNSVLSQIN (78 aa)) is c.

This sequence belongs to the heat shock protein 90 family. In terms of assembly, homodimer.

It is found in the cytoplasm. In terms of biological role, molecular chaperone. Has ATPase activity. The sequence is that of Chaperone protein HtpG from Ehrlichia ruminantium (strain Gardel).